Consider the following 389-residue polypeptide: Type 2 DNA topoisomerase 6 subunit A (389 aa).

The Topo IIA-type catalytic domain occupies K13 to K161. Residue Y107 is the O-(5'-phospho-DNA)-tyrosine intermediate of the active site. Mg(2+)-binding residues include E208 and D260.

It belongs to the TOP6A family. In terms of assembly, homodimer. Heterotetramer of two Top6A and two Top6B chains. Mg(2+) serves as cofactor.

It carries out the reaction ATP-dependent breakage, passage and rejoining of double-stranded DNA.. Functionally, relaxes both positive and negative superturns and exhibits a strong decatenase activity. The chain is Type 2 DNA topoisomerase 6 subunit A from Aeropyrum pernix (strain ATCC 700893 / DSM 11879 / JCM 9820 / NBRC 100138 / K1).